We begin with the raw amino-acid sequence, 283 residues long: Protease HtpX (283 aa).

2 helical membrane passes run 4–24 and 33–53; these read ILLF…ILSV and GGIL…SLFL. Residue histidine 139 coordinates Zn(2+). The active site involves glutamate 140. A Zn(2+)-binding site is contributed by histidine 143. The next 2 membrane-spanning stretches (helical) occupy residues 147–167 and 190–210; these read GDMV…IFLS and IYFL…SIIA. Glutamate 218 is a Zn(2+) binding site.

It belongs to the peptidase M48B family. Zn(2+) serves as cofactor.

Its subcellular location is the cell inner membrane. The protein is Protease HtpX of Haemophilus influenzae (strain PittEE).